The chain runs to 141 residues: Extracellular globin-1 (141 aa).

Residues 1-141 (DCNTLKRFKV…YAVIAAGIKP (141 aa)) enclose the Globin domain. A disulfide bridge links Cys2 with Cys131. Residue His94 participates in heme b binding.

The protein belongs to the globin family. The giant hemoglobins of worms are formed of a monomeric subunit and a disulfide-bonded trimer. This subunit is monomeric.

The protein resides in the secreted. This chain is Extracellular globin-1, found in Metaphire sieboldi (Earthworm).